Here is a 375-residue protein sequence, read N- to C-terminus: Succinyl-diaminopimelate desuccinylase (375 aa).

A Zn(2+)-binding site is contributed by histidine 66. Aspartate 68 is an active-site residue. Residue aspartate 99 coordinates Zn(2+). The Proton acceptor role is filled by glutamate 133. 3 residues coordinate Zn(2+): glutamate 134, glutamate 162, and histidine 348.

This sequence belongs to the peptidase M20A family. DapE subfamily. Homodimer. Requires Zn(2+) as cofactor. Co(2+) serves as cofactor.

It catalyses the reaction N-succinyl-(2S,6S)-2,6-diaminopimelate + H2O = (2S,6S)-2,6-diaminopimelate + succinate. It functions in the pathway amino-acid biosynthesis; L-lysine biosynthesis via DAP pathway; LL-2,6-diaminopimelate from (S)-tetrahydrodipicolinate (succinylase route): step 3/3. In terms of biological role, catalyzes the hydrolysis of N-succinyl-L,L-diaminopimelic acid (SDAP), forming succinate and LL-2,6-diaminopimelate (DAP), an intermediate involved in the bacterial biosynthesis of lysine and meso-diaminopimelic acid, an essential component of bacterial cell walls. In Escherichia coli O157:H7, this protein is Succinyl-diaminopimelate desuccinylase.